Here is a 1120-residue protein sequence, read N- to C-terminus: Transcriptional repressor NF-X1 (1120 aa).

Residues 9 to 26 (GTFKFNTDAAEFIPQEKK) form an interaction with PABPC1 and PABC4 region. A disordered region spans residues 22–295 (PQEKKNSGLN…LNERPAKSTC (274 aa)). Phosphoserine occurs at positions 50, 82, and 95. Over residues 73-106 (YHPSGSKPKSQQTSFQSSPCNKSPKSHGLQNQPW) the composition is skewed to polar residues. Residues 111–120 (NEKHHIRVKK) show a composition bias toward basic residues. Residues 124 to 141 (LAEQTSDTAGLESSTRSE) show a composition bias toward polar residues. 2 positions are modified to phosphoserine: serine 129 and serine 150. Basic and acidic residues-rich tracts occupy residues 142–159 (SGTDLREHSPSESEKEVV), 188–202 (LKCEWSNRTTPKPED), 222–254 (SSRKGVLDGYGARRNEQRRYPQKRPPWEVEGAR), and 282–291 (PKDDLNERPA). Residue serine 326 is modified to Phosphoserine. The RING-type; atypical zinc finger occupies 358-409 (CMVCCELVRVTAPVWSCQSCYHVFHLNCIKKWARSPASQADGQSGWRCPACQ). 8 NF-X1-type zinc fingers span residues 453–471 (CPHSCNLLCHPGPCPPCPA), 506–525 (CGQHQCAELCHGGQCQPCQI), 567–586 (CGNHTCSQVCHPQPCQQCPR), 632–655 (CGSLDFIHTCEKLCHEGDCGPCSR), 694–713 (CGRHKCNEICCVDKEHKCPL), 721–740 (CGLHRCEEPCHRGNCQTCWQ), 832–854 (CGMHKCQRLCHKGECLVDEPCKQ), and 863–884 (CGHPCMAPCHTSSPCPVTACKA). Positions 994-1062 (LKFVSDVEKE…KRNVVVTAIR (69 aa)) constitute an R3H domain. Residues 1081 to 1109 (QARPPPPIPHHRHQSDKNPGSSNLQKITK) are disordered. A compositionally biased stretch (polar residues) spans 1097-1106 (KNPGSSNLQK).

This sequence belongs to the NFX1 family. As to quaternary structure, isoform 1 interacts with PABPC1 and PABPC4. In terms of assembly, (Microbial infection) Isoform 1 and isoform 3 interact with human papillomavirus (HPV) type-16 E6 oncoprotein. In terms of processing, isoform 3 is polyubiquitinated in the presence of HPV16 E6 protein; which leads to proteasomal degradation. Isoform 1 is not polyubiquitinated.

It is found in the nucleus. Functionally, binds to the X-box motif of MHC class II genes and represses their expression. May play an important role in regulating the duration of an inflammatory response by limiting the period in which MHC class II molecules are induced by interferon-gamma. Isoform 3 binds to the X-box motif of TERT promoter and represses its expression. Together with PABPC1 or PABPC4, isoform 1 acts as a coactivator for TERT expression. Mediates E2-dependent ubiquitination. This chain is Transcriptional repressor NF-X1 (NFX1), found in Homo sapiens (Human).